We begin with the raw amino-acid sequence, 699 residues long: Ciliated left-right organizer metallopeptidase (699 aa).

The first 18 residues, 1–18, serve as a signal peptide directing secretion; sequence MKMWRLLLLGVATGRCLH. Residues 19–663 lie on the Extracellular side of the membrane; the sequence is EETQKSVRLL…SLDHNPSMTE (645 aa). Histidine 238 serves as a coordination point for Zn(2+). Residue glutamate 239 is part of the active site. Residues histidine 242 and histidine 318 each contribute to the Zn(2+) site. Residues 664-684 traverse the membrane as a helical segment; sequence LLLSTGFCLLVLILVGALGTL. The Cytoplasmic portion of the chain corresponds to 685-699; the sequence is AYQKRAMLQVAPSTT.

This sequence belongs to the peptidase M8 family. Requires Zn(2+) as cofactor. Specifically expressed in ciliated left-right organizer.

The protein resides in the membrane. Its function is as follows. Putative metalloproteinase that plays a role in left-right patterning process. This Mus musculus (Mouse) protein is Ciliated left-right organizer metallopeptidase.